The chain runs to 369 residues: Caffeine synthase 1 (369 aa).

Position 24 (Y24) interacts with S-adenosyl-L-homocysteine. Caffeine is bound at residue T31. 6 residues coordinate S-adenosyl-L-homocysteine: C66, N71, D103, L104, S138, and F139. Y156, H159, and W160 together coordinate caffeine. Mg(2+) is bound at residue N177. R225 provides a ligand contact to caffeine. The Mg(2+) site is built by D263, F265, and N266. F321 is a caffeine binding site.

The protein belongs to the methyltransferase superfamily. Type-7 methyltransferase family. Mg(2+) is required as a cofactor.

The enzyme catalyses theobromine + S-adenosyl-L-methionine = caffeine + S-adenosyl-L-homocysteine + H(+). It carries out the reaction 7-methylxanthine + S-adenosyl-L-methionine = theobromine + S-adenosyl-L-homocysteine + H(+). The protein operates within alkaloid biosynthesis. In terms of biological role, involved in the biosynthesis of caffeine. Catalyzes the conversion of 7-methylxanthine (7mX) to theobromine and of theobromine to caffeine. This is Caffeine synthase 1 from Camellia taliensis (Wild tea).